The chain runs to 107 residues: UPF0235 protein RPC_0058 (107 aa).

This sequence belongs to the UPF0235 family.

This Rhodopseudomonas palustris (strain BisB18) protein is UPF0235 protein RPC_0058.